The chain runs to 256 residues: Chalcone--flavanone isomerase (256 aa).

The substrate site is built by Thr-51, Asn-116, and Ser-193. The tract at residues 219-256 is disordered; that stretch reads NSTTDLNESENEKLNSNEVSKEEKPLQVEKSAFKEVEV. Basic and acidic residues predominate over residues 228–256; the sequence is ENEKLNSNEVSKEEKPLQVEKSAFKEVEV.

It belongs to the chalcone isomerase family. As to expression, nodules.

The enzyme catalyses a chalcone = a flavanone.. It functions in the pathway secondary metabolite biosynthesis; flavonoid biosynthesis. In terms of biological role, catalyzes the intramolecular cyclization of bicyclic chalcones into tricyclic (S)-flavanones. Responsible for the isomerization of 4,2',4',6'-tetrahydroxychalcone (also termed chalcone) into naringenin. The polypeptide is Chalcone--flavanone isomerase (CHI) (Elaeagnus umbellata (Autumn olive)).